The following is a 63-amino-acid chain: Prokaryotic ubiquitin-like protein UBact (63 aa).

A disordered region spans residues M1–E63. Basic and acidic residues predominate over residues P17–D50. E63 participates in a covalent cross-link: Isoglutamyl lysine isopeptide (Glu-Lys) (interchain with K-? in acceptor proteins).

Belongs to the ubiquitin-like protein UBact family.

Functionally, may function as a protein modifier covalently attached to lysine residues of substrate proteins. This may serve to target the modified proteins for degradation by proteasomes. This Handelsmanbacteria sp. (strain RIFCSPLOWO2_12_FULL_64_10) protein is Prokaryotic ubiquitin-like protein UBact.